The following is a 239-amino-acid chain: Ribonuclease PH (239 aa).

Phosphate contacts are provided by residues R87 and 125-127; that span reads GTR.

Belongs to the RNase PH family. In terms of assembly, homohexameric ring arranged as a trimer of dimers.

It catalyses the reaction tRNA(n+1) + phosphate = tRNA(n) + a ribonucleoside 5'-diphosphate. Functionally, phosphorolytic 3'-5' exoribonuclease that plays an important role in tRNA 3'-end maturation. Removes nucleotide residues following the 3'-CCA terminus of tRNAs; can also add nucleotides to the ends of RNA molecules by using nucleoside diphosphates as substrates, but this may not be physiologically important. Probably plays a role in initiation of 16S rRNA degradation (leading to ribosome degradation) during starvation. The protein is Ribonuclease PH of Saccharophagus degradans (strain 2-40 / ATCC 43961 / DSM 17024).